Consider the following 240-residue polypeptide: tRNA (guanine-N(1)-)-methyltransferase (240 aa).

S-adenosyl-L-methionine contacts are provided by residues Gly-110 and 129-134 (LGDFVL).

The protein belongs to the RNA methyltransferase TrmD family. In terms of assembly, homodimer.

Its subcellular location is the cytoplasm. It catalyses the reaction guanosine(37) in tRNA + S-adenosyl-L-methionine = N(1)-methylguanosine(37) in tRNA + S-adenosyl-L-homocysteine + H(+). Functionally, specifically methylates guanosine-37 in various tRNAs. This Clostridium botulinum (strain Langeland / NCTC 10281 / Type F) protein is tRNA (guanine-N(1)-)-methyltransferase.